A 362-amino-acid chain; its full sequence is Manganese peroxidase 3 (362 aa).

The N-terminal stretch at 1 to 18 (MAFKQLLTAISIVSVANA) is a signal peptide. Positions 19-23 (ALTRR) are excised as a propeptide. Intrachain disulfides connect cysteine 26-cysteine 39, cysteine 38-cysteine 309, cysteine 58-cysteine 144, and cysteine 273-cysteine 338. Mn(2+) is bound by residues glutamate 60 and glutamate 64. Histidine 71 (proton acceptor) is an active-site residue. Residues aspartate 72, glycine 90, aspartate 92, and serine 94 each coordinate Ca(2+). Residue asparagine 126 is glycosylated (N-linked (GlcNAc...) asparagine). Histidine 200 contributes to the heme b binding site. Threonine 201 is a Ca(2+) binding site. Aspartate 206 contributes to the Mn(2+) binding site. 4 residues coordinate Ca(2+): aspartate 218, threonine 220, isoleucine 223, and aspartate 225. The disordered stretch occupies residues 341–362 (TPFPSLSADPGPATSVAPVPPS).

The protein belongs to the peroxidase family. Ligninase subfamily. The cofactor is heme b. Ca(2+) serves as cofactor.

It is found in the secreted. The enzyme catalyses 2 Mn(2+) + H2O2 + 2 H(+) = 2 Mn(3+) + 2 H2O. Catalyzes the oxidation of Mn(2+) to Mn(3+). The latter, acting as a diffusible redox mediator, is capable of oxidizing a variety of lignin compounds. This isozyme is also able to oxidize phenols and amines in the absence of Mn(2+), similar to versatile peroxidases. The chain is Manganese peroxidase 3 (mnp3) from Phlebia radiata (White-rot fungus).